Reading from the N-terminus, the 592-residue chain is Alpha-1,3-galactosidase B (592 aa).

An N-terminal signal peptide occupies residues methionine 1 to serine 14. Cysteine 15 carries the N-palmitoyl cysteine lipid modification. Cysteine 15 is lipidated: S-diacylglycerol cysteine. 3 PbH1 repeats span residues threonine 429 to threonine 451, proline 452 to glycine 474, and cysteine 485 to aspartate 538.

It belongs to the glycosyl hydrolase 110 family. B subfamily.

It localises to the cell membrane. The catalysed reaction is Hydrolysis of terminal, non-reducing branched (1-&gt;3)-alpha-D-galactosidic residues, producing free D-galactose.. It carries out the reaction Hydrolysis of terminal, non-reducing linear (1-&gt;3)-alpha-D-galactosidic residues, producing free D-galactose.. The enzyme catalyses Hydrolysis of terminal, non-reducing alpha-D-galactose residues in alpha-D-galactosides, including galactose oligosaccharides, galactomannans and galactolipids.. In terms of biological role, alpha-galactosidase. Removes both branched alpha-1,3-linked galactose residues of blood group B antigens and linear alpha-1,3-linked galactose structures. The chain is Alpha-1,3-galactosidase B (glaB1) from Phocaeicola vulgatus (strain ATCC 8482 / DSM 1447 / JCM 5826 / CCUG 4940 / NBRC 14291 / NCTC 11154) (Bacteroides vulgatus).